The sequence spans 183 residues: Dermatopontin (183 aa).

Pyrrolidone carboxylic acid is present on Gln-1. Residue Tyr-5 is modified to Sulfotyrosine. Repeat copies occupy residues 8-61 (PYQQ…ACMP), 52-57 (DRQWNY), 62-117 (TPQS…CCRY), and 107-112 (DREWQF). The segment at 8–117 (PYQQYHDYSD…REWQFYCCRY (110 aa)) is 2 X 53-55 AA tandem repeats. Cystine bridges form between Cys-32–Cys-59, Cys-72–Cys-114, Cys-88–Cys-115, Cys-121–Cys-178, and Cys-125–Cys-171. The tract at residues 52–168 (DRQWNYACMP…AVERDRQWKF (117 aa)) is 3 X 6 AA tandem repeats of D-R-[EQ]-W-[NQK]-[FY]. Residues Tyr-144, Tyr-146, Tyr-148, and Tyr-149 each carry the sulfotyrosine modification. Residues 163 to 168 (DRQWKF) form a 2-3 repeat. Sulfotyrosine is present on Tyr-176.

Belongs to the dermatopontin family. In terms of assembly, interacts with TGFB1, DCN and collagen. In terms of processing, sulfated on tyrosine residue(s). In terms of tissue distribution, detected in skin, skeletal muscle, heart, lung, articular cartilage, long bone and calvaria. Smaller amounts detected in kidney. Not detected in brain, liver or spleen.

Its subcellular location is the secreted. The protein localises to the extracellular space. It localises to the extracellular matrix. Seems to mediate adhesion by cell surface integrin binding. May serve as a communication link between the dermal fibroblast cell surface and its extracellular matrix environment. Enhances TGFB1 activity. Inhibits cell proliferation. Accelerates collagen fibril formation, and stabilizes collagen fibrils against low-temperature dissociation. This chain is Dermatopontin (DPT), found in Sus scrofa (Pig).